We begin with the raw amino-acid sequence, 589 residues long: Transcription factor 4 (589 aa).

6 disordered regions span residues 1-124 (MTSR…SSSK), 138-163 (DGHHSSDPWSSSSGMNQPGYGGMLGN), 184-239 (PSHS…SQTG), 254-297 (HTNN…EGPL), 384-492 (SLLP…MANN), and 556-589 (KRREEEKVSSEPPPLSLAGPHPGMGDTANHMGQM). Phosphoserine occurs at positions 8 and 13. The span at 56-74 (GTLSPTKPGSQYYPYSSNN) shows a compositional bias: polar residues. The leucine-zipper stretch occupies residues 136-157 (MQDGHHSSDPWSSSSGMNQPGY). Over residues 184-224 (PSHSSADINSSLPPMSTFHRSGTNHYSTSSCTPPANGTDSI) the composition is skewed to polar residues. The segment covering 255-266 (TNNSFSSNPSTP) has biased composition (low complexity). Residues 283 to 292 (NGGQASSSPN) are compositionally biased toward polar residues. Ser290 is subject to Phosphoserine. The interval 380–403 (RGSHSLLPNQVPVPQLPVQSATSP) is class A specific domain. Composition is skewed to low complexity over residues 385 to 398 (LLPNQVPVPQLPVQ) and 421 to 430 (GQSVSSGSSE). Phosphoserine is present on Ser433. Basic and acidic residues-rich tracts occupy residues 445 to 461 (KSSEDKKLDDDKKDIKS) and 477 to 492 (PEQKAEREKERRMANN). Residues 486–539 (ERRMANNARERLRVRDINEAFKELGRMVQLHLKSDKPQTKLLILHQAVAVILSL) enclose the bHLH domain.

Efficient DNA binding requires dimerization with another bHLH protein. Forms homo- or heterooligomers with myogenin. Interacts with HIVEP2. Interacts with NEUROD2. Interacts with AGBL1.

The protein resides in the nucleus. Its function is as follows. Transcription factor that binds to the immunoglobulin enhancer Mu-E5/KE5-motif. Involved in the initiation of neuronal differentiation. Activates transcription by binding to the E box (5'-CANNTG-3'). Binds to the E-box present in the somatostatin receptor 2 initiator element (SSTR2-INR) to activate transcription. Interacts with the CCAAT displacement protein (CDP2) to bind the tyrosine hydroxylase enhancer. The polypeptide is Transcription factor 4 (Tcf4) (Rattus norvegicus (Rat)).